A 292-amino-acid polypeptide reads, in one-letter code: Acetylglutamate kinase (292 aa).

Residues 64–65, Arg86, and Asn190 each bind substrate; that span reads GG.

This sequence belongs to the acetylglutamate kinase family. ArgB subfamily.

The protein resides in the cytoplasm. It catalyses the reaction N-acetyl-L-glutamate + ATP = N-acetyl-L-glutamyl 5-phosphate + ADP. It functions in the pathway amino-acid biosynthesis; L-arginine biosynthesis; N(2)-acetyl-L-ornithine from L-glutamate: step 2/4. Functionally, catalyzes the ATP-dependent phosphorylation of N-acetyl-L-glutamate. This Trichlorobacter lovleyi (strain ATCC BAA-1151 / DSM 17278 / SZ) (Geobacter lovleyi) protein is Acetylglutamate kinase.